Here is a 93-residue protein sequence, read N- to C-terminus: Ribonuclease P protein component 4 (93 aa).

4 residues coordinate Zn(2+): Cys-55, Cys-58, Cys-81, and Cys-83.

Belongs to the eukaryotic/archaeal RNase P protein component 4 family. As to quaternary structure, consists of a catalytic RNA component and at least 4-5 protein subunits. Zn(2+) is required as a cofactor.

It localises to the cytoplasm. The catalysed reaction is Endonucleolytic cleavage of RNA, removing 5'-extranucleotides from tRNA precursor.. Functionally, part of ribonuclease P, a protein complex that generates mature tRNA molecules by cleaving their 5'-ends. This Halobacterium salinarum (strain ATCC 29341 / DSM 671 / R1) protein is Ribonuclease P protein component 4.